Consider the following 710-residue polypeptide: Polyribonucleotide nucleotidyltransferase (710 aa).

Asp-488 and Asp-494 together coordinate Mg(2+). The KH domain occupies Pro-555 to Ile-615. The 64-residue stretch at Gly-625–Phe-688 folds into the S1 motif domain. The disordered stretch occupies residues Phe-688–Asn-710. Residues Ser-691–Arg-700 show a composition bias toward basic and acidic residues. Residues Ser-701 to Asn-710 are compositionally biased toward basic residues.

The protein belongs to the polyribonucleotide nucleotidyltransferase family. Mg(2+) serves as cofactor.

It localises to the cytoplasm. The catalysed reaction is RNA(n+1) + phosphate = RNA(n) + a ribonucleoside 5'-diphosphate. Involved in mRNA degradation. Catalyzes the phosphorolysis of single-stranded polyribonucleotides processively in the 3'- to 5'-direction. This Pseudothermotoga lettingae (strain ATCC BAA-301 / DSM 14385 / NBRC 107922 / TMO) (Thermotoga lettingae) protein is Polyribonucleotide nucleotidyltransferase.